Here is a 450-residue protein sequence, read N- to C-terminus: Cysteine protease ATG4C (450 aa).

Catalysis depends on C112, which acts as the Nucleophile. Active-site residues include D336 and H338.

Belongs to the peptidase C54 family.

It is found in the cytoplasm. It carries out the reaction [protein]-C-terminal L-amino acid-glycyl-phosphatidylethanolamide + H2O = [protein]-C-terminal L-amino acid-glycine + a 1,2-diacyl-sn-glycero-3-phosphoethanolamine. In terms of biological role, cysteine protease that plays a key role in autophagy by mediating both proteolytic activation and delipidation of ATG8 family proteins. The protease activity is required for proteolytic activation of ATG8 family proteins: cleaves the C-terminal amino acid of ATG8 proteins to reveal a C-terminal glycine. Exposure of the glycine at the C-terminus is essential for ATG8 proteins conjugation to phosphatidylethanolamine (PE) and insertion to membranes, which is necessary for autophagy. In addition to the protease activity, also mediates delipidation of ATG8 family proteins. Catalyzes delipidation of PE-conjugated forms of ATG8 proteins during macroautophagy. This chain is Cysteine protease ATG4C, found in Xenopus tropicalis (Western clawed frog).